A 285-amino-acid polypeptide reads, in one-letter code: Probable endonuclease 4 (285 aa).

Zn(2+)-binding residues include H69, H109, E145, D179, H182, H216, D229, H231, and E261.

Belongs to the AP endonuclease 2 family. Zn(2+) serves as cofactor.

It carries out the reaction Endonucleolytic cleavage to 5'-phosphooligonucleotide end-products.. Endonuclease IV plays a role in DNA repair. It cleaves phosphodiester bonds at apurinic or apyrimidinic (AP) sites, generating a 3'-hydroxyl group and a 5'-terminal sugar phosphate. This Salmonella typhi protein is Probable endonuclease 4.